Consider the following 1113-residue polypeptide: Cytospin-A (1113 aa).

The segment at 1 to 160 (MKKSVRPAAS…KSKSDGQISD (160 aa)) is disordered. A compositionally biased stretch (polar residues) spans 59 to 103 (ASCNAVSKSKRTTSVGTTASTLDSKPKTASGTTSKRLASSLSKET). Positions 145–154 (SEGRMSKSKS) are enriched in basic and acidic residues. A coiled-coil region spans residues 220 to 259 (AADVESTLILLQEQNQAIREELNLLKSENRMLKDRLNALG). The tract at residues 284-374 (AGSGQSDGGG…RRGSSGNASE (91 aa)) is disordered. A compositionally biased stretch (low complexity) spans 338–358 (SSDDALDAPSGASSSSESECA). Coiled coils occupy residues 379–433 (CLTE…MDSL) and 473–791 (MELE…RGRV). 4 disordered regions span residues 766–785 (QEKN…RKQD), 832–902 (FDSA…PTYP), 914–957 (GSAA…DGAS), and 972–997 (ALAS…RKDP). The span at 834 to 845 (SASQGPPSSGAS) shows a compositional bias: low complexity. Residues 856 to 867 (PRTPLSPSPMKT) show a composition bias toward pro residues. A compositionally biased stretch (polar residues) spans 925–940 (QRVSNMDSTKAISVSR). Over residues 941–951 (RSSEEMKRDMA) the composition is skewed to basic and acidic residues. A compositionally biased stretch (low complexity) spans 972–981 (ALASSSPTAS). The Calponin-homology (CH) domain maps to 1007 to 1112 (GSKRNALLKW…YVTAIYKYFE (106 aa)).

This sequence belongs to the cytospin-A family. As to quaternary structure, may interact with both microtubules and actin cytoskeleton.

Its subcellular location is the cytoplasm. The protein resides in the cytoskeleton. It localises to the spindle. The protein localises to the cell junction. It is found in the gap junction. Its function is as follows. Involved in cytokinesis and spindle organization. May play a role in actin cytoskeleton organization and microtubule stabilization and hence required for proper cell adhesion and migration. This Tetraodon nigroviridis (Spotted green pufferfish) protein is Cytospin-A (specc1l).